The following is a 213-amino-acid chain: Leucyl/phenylalanyl-tRNA--protein transferase (213 aa).

Belongs to the L/F-transferase family.

It is found in the cytoplasm. It catalyses the reaction N-terminal L-lysyl-[protein] + L-leucyl-tRNA(Leu) = N-terminal L-leucyl-L-lysyl-[protein] + tRNA(Leu) + H(+). The catalysed reaction is N-terminal L-arginyl-[protein] + L-leucyl-tRNA(Leu) = N-terminal L-leucyl-L-arginyl-[protein] + tRNA(Leu) + H(+). The enzyme catalyses L-phenylalanyl-tRNA(Phe) + an N-terminal L-alpha-aminoacyl-[protein] = an N-terminal L-phenylalanyl-L-alpha-aminoacyl-[protein] + tRNA(Phe). Its function is as follows. Functions in the N-end rule pathway of protein degradation where it conjugates Leu, Phe and, less efficiently, Met from aminoacyl-tRNAs to the N-termini of proteins containing an N-terminal arginine or lysine. In Rhodospirillum rubrum (strain ATCC 11170 / ATH 1.1.1 / DSM 467 / LMG 4362 / NCIMB 8255 / S1), this protein is Leucyl/phenylalanyl-tRNA--protein transferase.